The primary structure comprises 319 residues: tRNA uridine(34) hydroxylase (319 aa).

The 95-residue stretch at 127-221 (KQEDTVIIDA…YGKDPEVQGE (95 aa)) folds into the Rhodanese domain. Cys181 serves as the catalytic Cysteine persulfide intermediate.

Belongs to the TrhO family.

The enzyme catalyses uridine(34) in tRNA + AH2 + O2 = 5-hydroxyuridine(34) in tRNA + A + H2O. In terms of biological role, catalyzes oxygen-dependent 5-hydroxyuridine (ho5U) modification at position 34 in tRNAs. This is tRNA uridine(34) hydroxylase from Bacillus anthracis (strain A0248).